The sequence spans 239 residues: MATSGRLSFTVRSLLDLPEQDAQHLPRREPEPRAPQPDPCAAWLDSERGHYPSSDESSLETSPPDSSQRPSARPASPGSDAEKRKKRRVLFSKAQTLELERRFRQQRYLSAPEREQLASLLRLTPTQVKIWFQNHRYKLKRARAPGAAESPDLAASAELHAAPGLLRRVVVPVLVRDGQPCGGGGGGEVGTAAAQEKCGAPPAAACPLPGYPAFGPGSALGLFPAYQHLASPALVSWNW.

A compositionally biased stretch (polar residues) spans 1–11 (MATSGRLSFTV). Residues 1–87 (MATSGRLSFT…GSDAEKRKKR (87 aa)) form a disordered region. The segment covering 21–32 (DAQHLPRREPEP) has biased composition (basic and acidic residues). The segment covering 62–79 (SPPDSSQRPSARPASPGS) has biased composition (low complexity). A DNA-binding region (homeobox) is located at residues 84–143 (RKKRRVLFSKAQTLELERRFRQQRYLSAPEREQLASLLRLTPTQVKIWFQNHRYKLKRAR).

The protein belongs to the NK-2 homeobox family.

The protein localises to the nucleus. The chain is Homeobox protein Nkx-2.8 (NKX2-8) from Homo sapiens (Human).